The sequence spans 334 residues: Protein-methionine-sulfoxide reductase catalytic subunit MsrP (334 aa).

Positions 1–44 form a signal peptide, tat-type signal; it reads MKKNQFLKESDVTAESVFFMKRRQVLKALGISAAALSLPHAAHA. Residues N88, 91–92, C146, T181, N233, R238, and 249–251 each bind Mo-molybdopterin; these read YE and GIK.

Belongs to the MsrP family. Heterodimer of a catalytic subunit (MsrP) and a heme-binding subunit (MsrQ). Mo-molybdopterin serves as cofactor. In terms of processing, predicted to be exported by the Tat system. The position of the signal peptide cleavage has not been experimentally proven.

Its subcellular location is the periplasm. It catalyses the reaction L-methionyl-[protein] + a quinone + H2O = L-methionyl-(S)-S-oxide-[protein] + a quinol. The enzyme catalyses L-methionyl-[protein] + a quinone + H2O = L-methionyl-(R)-S-oxide-[protein] + a quinol. Functionally, part of the MsrPQ system that repairs oxidized periplasmic proteins containing methionine sulfoxide residues (Met-O), using respiratory chain electrons. Thus protects these proteins from oxidative-stress damage caused by reactive species of oxygen and chlorine generated by the host defense mechanisms. MsrPQ is essential for the maintenance of envelope integrity under bleach stress, rescuing a wide series of structurally unrelated periplasmic proteins from methionine oxidation, including the primary periplasmic chaperone SurA and the lipoprotein Pal. The catalytic subunit MsrP is non-stereospecific, being able to reduce both (R-) and (S-) diastereoisomers of methionine sulfoxide. The protein is Protein-methionine-sulfoxide reductase catalytic subunit MsrP of Escherichia coli O9:H4 (strain HS).